A 227-amino-acid chain; its full sequence is Dephospho-CoA kinase (227 aa).

Residues 31–227 (KIGLTGGIGS…EKLFQFINCL (197 aa)) enclose the DPCK domain. Residue 39 to 44 (GSGKST) coordinates ATP.

Belongs to the CoaE family.

The protein resides in the cytoplasm. It carries out the reaction 3'-dephospho-CoA + ATP = ADP + CoA + H(+). It functions in the pathway cofactor biosynthesis; coenzyme A biosynthesis; CoA from (R)-pantothenate: step 5/5. Catalyzes the phosphorylation of the 3'-hydroxyl group of dephosphocoenzyme A to form coenzyme A. The polypeptide is Dephospho-CoA kinase (Clostridium tetani (strain Massachusetts / E88)).